We begin with the raw amino-acid sequence, 296 residues long: Arginine/serine-rich protein 1 (296 aa).

The disordered stretch occupies residues 1-131; the sequence is MSNYVNDMWP…RSRSRSRERS (131 aa). Phosphoserine is present on Ser-12. Positions 20 to 31 are enriched in low complexity; that stretch reads SASRSGGSSRLS. Positions 32–125 are enriched in basic residues; that stretch reads SRSRSRSFSR…RSRSRSRSRS (94 aa). A phosphoserine mark is found at Ser-111 and Ser-113. The residue at position 141 (Arg-141) is an Omega-N-methylarginine. Residues 156–165 show a composition bias toward basic and acidic residues; sequence ERSRWRDRSR. Disordered stretches follow at residues 156–175 and 217–296; these read ERSR…TPFR and SHGI…WIPV. Residues 245 to 261 are compositionally biased toward polar residues; sequence EKPSQQRSIAFSSNNSV. Basic and acidic residues predominate over residues 272–287; that stretch reads ATEETSSRSPKIDKKK. Ser-280 is subject to Phosphoserine.

It belongs to the RSRP family. Phosphorylated. Phosphorylation at Ser-111 and Ser-113 mediates the interaction with spliceosome proteins.

It localises to the nucleus. Its function is as follows. Probably acts as a spliceosomal factor that contributes to spliceosome assembly and regulates the isoform switching of proteins such as PARP6. The protein is Arginine/serine-rich protein 1 (RSRP1) of Macaca fascicularis (Crab-eating macaque).